We begin with the raw amino-acid sequence, 468 residues long: 3-isopropylmalate dehydratase large subunit (468 aa).

[4Fe-4S] cluster contacts are provided by Cys-347, Cys-407, and Cys-410.

Belongs to the aconitase/IPM isomerase family. LeuC type 1 subfamily. As to quaternary structure, heterodimer of LeuC and LeuD. [4Fe-4S] cluster serves as cofactor.

It catalyses the reaction (2R,3S)-3-isopropylmalate = (2S)-2-isopropylmalate. Its pathway is amino-acid biosynthesis; L-leucine biosynthesis; L-leucine from 3-methyl-2-oxobutanoate: step 2/4. Functionally, catalyzes the isomerization between 2-isopropylmalate and 3-isopropylmalate, via the formation of 2-isopropylmaleate. In Synechococcus sp. (strain CC9311), this protein is 3-isopropylmalate dehydratase large subunit.